Reading from the N-terminus, the 1291-residue chain is 1-phosphatidylinositol 4,5-bisphosphate phosphodiesterase gamma-1 (1291 aa).

Ala2 is subject to N-acetylalanine. One can recognise a PH 1 domain in the interval 27-142 (RSLEVGTVMT…WIRGLTWLME (116 aa)). One can recognise an EF-hand domain in the interval 152–187 (QIERWLRKQFYSVDRNREDRISAKDLKNMLSQVNYR). Residues Asp165, Asn167, Glu169, Arg171, and Asp176 each contribute to the Ca(2+) site. The region spanning 320–464 (DTMNNPLSHY…LKRKILIKHK (145 aa)) is the PI-PLC X-box domain. Catalysis depends on residues His335 and His380. The PH 2; first part domain maps to 489 to 523 (SIKNGILYLEDPVNHEWYPHYFVLTSSKIYYSEET). Tyr506 is subject to Phosphotyrosine. The interval 522–544 (ETSSDQGNEDEEEPKEASGSTEL) is disordered. SH2 domains are found at residues 550–657 (WFHG…SEPV) and 668–756 (WYHA…RYPI). Position 771 is a phosphotyrosine; by SYK (Tyr771). A phosphotyrosine mark is found at Tyr775 and Tyr783. Tyr783 bears the Phosphotyrosine; by ITK, SYK and TXK mark. Residues 791–851 (TFKCAVKALF…PSNYVEEMVS (61 aa)) form the SH3 domain. The PH 2; second part domain maps to 895 to 931 (FVFSISMASVAHWSLDVAADSQEELQDWVKKIREVAQ). The PI-PLC Y-box domain occupies 953–1070 (LSELVVYCRP…GYVLQPSVMR (118 aa)). Tyr977 is subject to Phosphotyrosine. The 124-residue stretch at 1071 to 1194 (DEAFDPFDKS…TGYRAVPLKN (124 aa)) folds into the C2 domain. Phosphoserine is present on residues Ser1222, Ser1228, and Ser1249. Phosphotyrosine is present on Tyr1254. Ser1264 is subject to Phosphoserine. Positions 1271-1291 (HFDGRDRRTPRRTRVNGDNRL) are disordered.

As to quaternary structure, interacts with AGAP2 via its SH3 domain. Interacts (via SH2 domain) with RET. Interacts with FLT1 (tyrosine-phosphorylated). Interacts (via SH2 domain) with FGFR1, FGFR2, FGFR3 and FGFR4 (phosphorylated). Interacts with LAT (phosphorylated) upon TCR activation. Interacts (via SH3 domain) with the Pro-rich domain of TNK1. Associates with BLNK, VAV1, GRB2 and NCK1 in a B-cell antigen receptor-dependent fashion. Interacts with CBLB in activated T-cells; which inhibits phosphorylation. Interacts with SHB. Interacts (via SH3 domain) with the Arg/Gly-rich-flanked Pro-rich domains of KHDRBS1/SAM68. This interaction is selectively regulated by arginine methylation of KHDRBS1/SAM68. Interacts with INPP5D/SHIP1, THEMIS and CLNK. Interacts with AXL, FLT4 and KIT. Interacts with RALGPS1. Interacts (via the SH2 domains) with VIL1 (phosphorylated at C-terminus tyrosine phosphorylation sites). Interacts (via SH2 domain) with PDGFRA and PDGFRB (tyrosine phosphorylated). Interacts with PIP5K1C. Interacts with NTRK1 and NTRK2 (phosphorylated upon ligand-binding). Interacts with SYK; activates PLCG1. Interacts with GRB2, LAT and THEMIS upon TCR activation in thymocytes. Interacts with TESPA1; the association is increased with prolonged stimulation of the TCR and may facilitate the assembly of the LAT signalosome. Interacts (via C-terminal proline-rich domain (PRD)) with PLCG1 (via SH3 domain); this interaction leads to guanine nucleotide exchange from PlCG1 to DNM1 and enhances DNM1-dependent endocytosis. Ca(2+) serves as cofactor. In terms of processing, ubiquitinated by CBLB in activated T-cells. Tyrosine phosphorylated in response to signaling via activated FLT3, KIT and PDGFRA. Tyrosine phosphorylated by activated FGFR1, FGFR2, FGFR3 and FGFR4. Tyrosine phosphorylated by activated FLT1 and KDR. Tyrosine phosphorylated by activated PDGFRB. The receptor-mediated activation of PLCG1 involves its phosphorylation by tyrosine kinases, in response to ligation of a variety of growth factor receptors and immune system receptors. For instance, SYK phosphorylates and activates PLCG1 in response to ligation of the B-cell receptor. May be dephosphorylated by PTPRJ. Phosphorylated by ITK and TXK on Tyr-783 upon TCR activation in T-cells.

Its subcellular location is the cell projection. The protein resides in the lamellipodium. The protein localises to the ruffle. The enzyme catalyses a 1,2-diacyl-sn-glycero-3-phospho-(1D-myo-inositol-4,5-bisphosphate) + H2O = 1D-myo-inositol 1,4,5-trisphosphate + a 1,2-diacyl-sn-glycerol + H(+). The catalysed reaction is a 1,2-diacyl-sn-glycero-3-phospho-(1D-myo-inositol) + H2O = 1D-myo-inositol 1-phosphate + a 1,2-diacyl-sn-glycerol + H(+). With respect to regulation, activated by phosphorylation on tyrosine residues. Its function is as follows. Mediates the production of the second messenger molecules diacylglycerol (DAG) and inositol 1,4,5-trisphosphate (IP3). Plays an important role in the regulation of intracellular signaling cascades. Becomes activated in response to ligand-mediated activation of receptor-type tyrosine kinases, such as PDGFRA, PDGFRB, EGFR, FGFR1, FGFR2, FGFR3 and FGFR4. Plays a role in actin reorganization and cell migration. Guanine nucleotide exchange factor that binds the GTPase DNM1 and catalyzes the dissociation of GDP, allowing a GTP molecule to bind in its place, therefore enhancing DNM1-dependent endocytosis. This is 1-phosphatidylinositol 4,5-bisphosphate phosphodiesterase gamma-1 from Bos taurus (Bovine).